Reading from the N-terminus, the 268-residue chain is Undecaprenyl-diphosphatase (268 aa).

The next 7 membrane-spanning stretches (helical) occupy residues 47–67, 83–103, 109–129, 144–164, 184–204, 217–237, and 246–266; these read FTIL…FAKL, FVIG…LAGG, LFNP…LLWV, FPLP…IPGV, AAEF…VYDL, LIVA…VKSF, and FTLF…ALAL.

It belongs to the UppP family.

The protein resides in the cell inner membrane. The catalysed reaction is di-trans,octa-cis-undecaprenyl diphosphate + H2O = di-trans,octa-cis-undecaprenyl phosphate + phosphate + H(+). Catalyzes the dephosphorylation of undecaprenyl diphosphate (UPP). Confers resistance to bacitracin. In Rhodopseudomonas palustris (strain BisB18), this protein is Undecaprenyl-diphosphatase.